The chain runs to 351 residues: Photosystem II D2 protein (351 aa).

A helical membrane pass occupies residues 39-59 (CAYLALGAWFTGTTFVSSWYT). His-116 serves as a coordination point for chlorophyll a. The chain crosses the membrane as a helical span at residues 123–139 (GFCLRQFEIARLVGLRP). Residues Gln-128 and Asn-141 each coordinate pheophytin a. Residues 151 to 164 (VFVSVFLLYPLGQA) form a helical membrane-spanning segment. Residue His-196 participates in chlorophyll a binding. Residues 206 to 226 (GALLCAIHGATVENTLFEDGE) form a helical membrane-spanning segment. The a plastoquinone site is built by His-213 and Phe-260. His-213 is a binding site for Fe cation. His-267 serves as a coordination point for Fe cation. The helical transmembrane segment at 277-293 (GLWVSSIGIVGLALNLR) threads the bilayer.

Belongs to the reaction center PufL/M/PsbA/D family. PSII is composed of 1 copy each of membrane proteins PsbA, PsbB, PsbC, PsbD, PsbE, PsbF, PsbH, PsbI, PsbJ, PsbK, PsbL, PsbM, PsbT, PsbY, PsbZ, Psb30/Ycf12, at least 3 peripheral proteins of the oxygen-evolving complex and a large number of cofactors. It forms dimeric complexes. Requires The D1/D2 heterodimer binds P680, chlorophylls that are the primary electron donor of PSII, and subsequent electron acceptors. It shares a non-heme iron and each subunit binds pheophytin, quinone, additional chlorophylls, carotenoids and lipids. There is also a Cl(-1) ion associated with D1 and D2, which is required for oxygen evolution. The PSII complex binds additional chlorophylls, carotenoids and specific lipids. as cofactor.

It localises to the plastid. The protein resides in the chloroplast thylakoid membrane. It catalyses the reaction 2 a plastoquinone + 4 hnu + 2 H2O = 2 a plastoquinol + O2. Photosystem II (PSII) is a light-driven water:plastoquinone oxidoreductase that uses light energy to abstract electrons from H(2)O, generating O(2) and a proton gradient subsequently used for ATP formation. It consists of a core antenna complex that captures photons, and an electron transfer chain that converts photonic excitation into a charge separation. The D1/D2 (PsbA/PsbD) reaction center heterodimer binds P680, the primary electron donor of PSII as well as several subsequent electron acceptors. D2 is needed for assembly of a stable PSII complex. The protein is Photosystem II D2 protein of Cyanidium caldarium (Red alga).